A 430-amino-acid polypeptide reads, in one-letter code: MVGYIGNVDIGVFDAEVANSISAELERQNTLLQMIASENFVSRAVLQAQGSVLTNKYAEGYAGSRYYCGCALVDVVENLAVERLCRLFGCKFANVQPHSGSQANQQVFMALLKPGDTILGMSLDCGGHLTHGAAPNVSGRWFNAVSYGVNRDTGLIDMDEVEALALSAKPSLIIAGASSYPRRIDFAAFRAIADKVGAYLLADIAHYSGLIAGGCYPSPFGHAHVVTSTTHKTLRGPRGAVIMTDDEEIHKKIRLSVFPGMQGGPLMHVIAAKAVAFKEALHPDFKLYAQQVLENSRVLAGVLSSEGLDVVTGGTDSHIVLLDLRSKGVTGREVSSSLERAGIVCNKNAVPFDTEKPWVTSGIRLGSAAETSRGLGVPEFESIGRLVAKVVNACSLGQEKMSAAEAEVRREVNGLVRSLPMSAFPVCEVC.

Residues Leu123 and 127 to 129 (GHL) each bind (6S)-5,6,7,8-tetrahydrofolate. Lys232 carries the N6-(pyridoxal phosphate)lysine modification. Glu248 serves as a coordination point for (6S)-5,6,7,8-tetrahydrofolate.

The protein belongs to the SHMT family. As to quaternary structure, homodimer. Pyridoxal 5'-phosphate serves as cofactor.

It is found in the cytoplasm. It catalyses the reaction (6R)-5,10-methylene-5,6,7,8-tetrahydrofolate + glycine + H2O = (6S)-5,6,7,8-tetrahydrofolate + L-serine. Its pathway is one-carbon metabolism; tetrahydrofolate interconversion. It participates in amino-acid biosynthesis; glycine biosynthesis; glycine from L-serine: step 1/1. Catalyzes the reversible interconversion of serine and glycine with tetrahydrofolate (THF) serving as the one-carbon carrier. This reaction serves as the major source of one-carbon groups required for the biosynthesis of purines, thymidylate, methionine, and other important biomolecules. Also exhibits THF-independent aldolase activity toward beta-hydroxyamino acids, producing glycine and aldehydes, via a retro-aldol mechanism. The sequence is that of Serine hydroxymethyltransferase from Anaplasma marginale (strain Florida).